The following is a 575-amino-acid chain: Cytokinin dehydrogenase 1 (575 aa).

The signal sequence occupies residues 1–31 (MGLTSSLRFHRQNNKTFLGIFMILVLSCIPG). 3 N-linked (GlcNAc...) asparagine glycosylation sites follow: Asn-14, Asn-38, and Asn-115. The 179-residue stretch at 84–262 (YQLPPLAILH…TRARISLEPA (179 aa)) folds into the FAD-binding PCMH-type domain. FAD-binding residues include Ala-120, Gly-122, and Gly-124. At His-125 the chain carries Pros-8alpha-FAD histidine. The FAD site is built by Ser-126, Gln-130, Asp-186, Thr-191, Ser-197, Ile-201, and Ile-252. Asn-303, Asn-318, Asn-437, and Asn-467 each carry an N-linked (GlcNAc...) asparagine glycan. FAD is bound by residues Tyr-498 and Gln-536.

This sequence belongs to the oxygen-dependent FAD-linked oxidoreductase family. FAD is required as a cofactor. As to expression, expressed in shoot apexes, lateral shoot meristems, growing tissues of young flowers, and weakly at the root-hypocotyl junction.

The protein localises to the vacuole. The catalysed reaction is N(6)-dimethylallyladenine + A + H2O = 3-methyl-2-butenal + adenine + AH2. Its function is as follows. Catalyzes the oxidation of cytokinins, a family of N(6)-substituted adenine derivatives that are plant hormones, where the substituent is an isopentenyl group. Catalyzes in vitro the oxidation of various types of cytokinin nucleotides that are known as direct products of cytokinin biosynthesis. Promotes adventitious root initiation downstream of MYC2-dependent jasmonate signaling. Cytokinin degraded by CKX1 is required for cell division in the female gametophyte by modulating the expression of cell cycle genes. The chain is Cytokinin dehydrogenase 1 (CKX1) from Arabidopsis thaliana (Mouse-ear cress).